The following is a 425-amino-acid chain: Succinyl-diaminopimelate desuccinylase (425 aa).

H96 is a Zn(2+) binding site. D98 is an active-site residue. D129 is a binding site for Zn(2+). The active-site Proton acceptor is E163. E164, E192, and H378 together coordinate Zn(2+).

Belongs to the peptidase M20A family. DapE subfamily. As to quaternary structure, homodimer. Requires Zn(2+) as cofactor. Co(2+) serves as cofactor.

The enzyme catalyses N-succinyl-(2S,6S)-2,6-diaminopimelate + H2O = (2S,6S)-2,6-diaminopimelate + succinate. Its pathway is amino-acid biosynthesis; L-lysine biosynthesis via DAP pathway; LL-2,6-diaminopimelate from (S)-tetrahydrodipicolinate (succinylase route): step 3/3. Functionally, catalyzes the hydrolysis of N-succinyl-L,L-diaminopimelic acid (SDAP), forming succinate and LL-2,6-diaminopimelate (DAP), an intermediate involved in the bacterial biosynthesis of lysine and meso-diaminopimelic acid, an essential component of bacterial cell walls. This chain is Succinyl-diaminopimelate desuccinylase, found in Polaromonas sp. (strain JS666 / ATCC BAA-500).